The chain runs to 2696 residues: Protein ILITYHIA (2696 aa).

Residues 1 to 18 (MSYSMVNASSAVSSPETA) show a composition bias toward polar residues. Positions 1-26 (MSYSMVNASSAVSSPETAKNSDEPPP) are disordered. 9 HEAT repeats span residues 162–204 (DIAP…MKTF), 253–290 (STQASLLRIIMESSFRMRRACKRFMFHLFSQSQAIYSL), 303–340 (KDSPELLGLLLEFSCSSPALFEQSKAIFVDIYVKDVLN), 364–400 (EFQTVILPAAVKMLKRNPEIVLESVGFLLANVNIDLS), 401–438 (KYALELLPVILPQARHTDEDRRLGALSMVMCLSEKSSN), 487–525 (SLSRTICSFLIACYKDEGNEDVKLSILSAVASWASRSSV), 526–562 (AIQPNLVSFIAAGLKEKEALRRGHLRCVRIICRNPDT), 564–601 (SQISDLLSPLIQLVKTGFTKAVQRLDGIYALLIVSKIA), and 642–677 (VVCVDLLEVLLVEHSSRVLEAFSLKSLSQLLLFLLC). The segment at 901–941 (KQEPSSNHSLKKGLASRETANSGRRDTAKLTKKADKGKTAK) is disordered. Residues 923–941 (GRRDTAKLTKKADKGKTAK) show a composition bias toward basic and acidic residues. HEAT repeat units lie at residues 985 to 1021 (HSQLPFLATFLDPLLRSPIVSAAAFENLVKLARCTVQ), 1082 to 1118 (DTFTFIFPVLYHVLGVVPAYQASVGPALNELCLGLQA), 1188 to 1225 (HDLGTDYSGIFKALSHINLNVRLAAAEALADALHESPS), 1273 to 1311 (KDLPAVMTFLISRALADPNTDVRGKMINAGIMIIDKHGK), 1315 to 1355 (SLLF…HLAR), 1358 to 1395 (PKVHNVVEKLLEVLNTPSESVQRAVSTCLSPLVLSKQE), 1397 to 1433 (APALFLRLLDKLMKSDKYGERRGAAFGLAGVVMGFGI), 1436 to 1474 (LKKYGLIVTLQEALIDRNSAKRREGALLAFECLCEKLGK), 1478 to 1515 (PYVIKMLPLLLVSFSDQVGAVREAAECAARAMMSQLSA), 1516 to 1553 (YGVKLVLPSLLKGLEDKAWRTKQSSVQLLGAMAFCAPQ), 1564 to 1600 (PKLTEVFKTIQVLTDTHPKVQSAGQLALQQVGSVIKN), 1601 to 1638 (PEISSLVPTLLLALTDPNEYTRHALDTLLQTTFVNSVD), 1640 to 1677 (PSLALLVPIVHRGLRERSSETKKKASQIVGNMCSLVTE), 1683 to 1720 (PYIGLLLPEVKKVLVDPIPEVRSVAARAVGSLIRGMGE), 1722 to 1759 (NFPDLVPWLFETLKSDTSNVERYGAAQGLSEVIAALGT), 1761 to 1797 (YFENILPDLIRHCSHQKASVRDGYLTLFKFLPRSLGA), 1801 to 1838 (KYLQLVLPAILDGLADENESVRDAALGAGHVLVEHHAT), and 1840 to 1876 (SLPLLLPAVEDGIFNDNWRIRQSSVELLGDLLFKVAG). At serine 1887 the chain carries Phosphoserine. HEAT repeat units lie at residues 1908–1945 (DKRNEVLAALYMVRTDVSLSVRQAALHVWKTIVANTPK), 1949–1986 (EIMPILMSTLISSLASPSSERRQVAGRSLGELVRKLGE), 1988–2024 (VLPLIIPILSKGLKDPDVDKRQGVCIGLNEVMASAGR), 2029–2066 (SFMDQLIPTIRTALCDSALEVRESAGLAFSTLYKSAGL), 2067–2102 (QAMDEIIPTLLEALEDDEMSTTALDGLKQIISVRTA), 2104–2137 (VLPHILPKLVHLPLSALNAHALGALAEVAGAGFN), 2138–2175 (THLGTILPALLSAMGGENKEVQELAQEAAERVVLVIDE), 2177–2213 (GVETLLSELLKGVSDSQASIRRSSAYLIGYFFKSSKL), 2217–2254 (DEAPNMISTLIVMLSDSDSTTVAVSWEALARVIGSVPK), 2258–2292 (PSYIKLVRDAVSTARDKERRKRKGGYVVIPGLCLP), 2293–2330 (KSLKPLLPVFLQGLISGSAELREQAAIGLGELIEVTSE), 2335–2373 (EFVIPITGPLIRIIGDRFPWQVKSAILATLIILIQRGGM), 2377–2414 (PFLPQLQTTFVKCLQDSTRTIRSSAAVALGKLSALSTR), 2416–2450 (DPLVGDLMTSFQAADSGVREAILSAMRGVIKHAGK), 2455–2492 (AVRVRIFDLLKDLMHHEDDQVRISATSMLGVLSQYLEA), 2494–2530 (QLSVLLQEVNDLSASQNWGARHGSVLCISSLLKHNPS), 2536–2573 (SLFSSMLNSLKSSLKDEKFPLRESSTKALGRLLLKQLA), 2580–2617 (KVVIDVLSSIVSALHDDSSEVRRRALSSLKAFAKDNPS), and 2620–2658 (MANISVIGPPLAECLKDGNTPVRLAAERCALHVFQLTKG).

Belongs to the GCN1 family.

Its function is as follows. Involved in immunity against bacterial infection and in non-host resistance. Required for embryo development. Required for systemic acquired resistance, but functions in an salicylic acid-independent manner. Required for bacterium-triggered stomatal closure response. In Arabidopsis thaliana (Mouse-ear cress), this protein is Protein ILITYHIA.